Here is a 633-residue protein sequence, read N- to C-terminus: MSLQPQAETLSFEAEVKQLLHLVAHSLYSNKEIFLRELISNSSDAADKLRYQALSDAALYENDADLKIWIDFDKDNRTITIRDNGIGMSREEVIENLGTIAKSGTRAFRELLAEKKAEDSQLIGQFGVGFYSAFIVADRVVVRTRRAGMKADQGVEWESTGEGEYTLKNIDKPTRGTEVVLHLKESEEEFLDPLRLRAIITKYSDHILLPIVMKKIKTSGADDEDKNETPEEEVVNRANALWVLPKDKIKDEEYKELYKHIAHDFEDPLAWVHNKVEGKLEYTTLLYIPARAPFDLWNREGQRGLKLYVKRIFIMDDAEHFMPMYLRFVKGIVDSNDLPLNISRELLQSNEVINKIKAGCVKRILSLLEDLAKNDKEKYASFWKAFGQVLKEGPAEDFANRDRIANLLRFASTHNDTDEQNVSLQDYISRMKPEQNKIYYIVADTYTSAKNSPLLEVFRKKDIEVLLMSDRVDEWLVAHLNEFEGKSLQSIAKGTLDLGDLEKEEKVETEKFEKDFDELLKQFKEVLGEKIKDVRITHRLTDSPTCVVFDENEMSGHLQRLLIQTGQDFMQAKPILEINPSHPLILRVKNESDKTRFNRWADLLLNQALLAEGEQLKDPASFVKGLNELLLDS.

The tract at residues 1–344 is a; substrate-binding; it reads MSLQPQAETL…SNDLPLNISR (344 aa). A b region spans residues 345–560; it reads ELLQSNEVIN…ENEMSGHLQR (216 aa). The tract at residues 561 to 633 is c; that stretch reads LLIQTGQDFM…KGLNELLLDS (73 aa).

It belongs to the heat shock protein 90 family. As to quaternary structure, homodimer.

It localises to the cytoplasm. Functionally, molecular chaperone. Has ATPase activity. This Coxiella burnetii (strain RSA 493 / Nine Mile phase I) protein is Chaperone protein HtpG.